The primary structure comprises 747 residues: DNA topoisomerase 4 subunit A (747 aa).

Positions 35 to 498 (LPFIGDGLKP…EAKMISESDM (464 aa)) constitute a Topo IIA-type catalytic domain. Y124 functions as the O-(5'-phospho-DNA)-tyrosine intermediate in the catalytic mechanism.

It belongs to the type II topoisomerase GyrA/ParC subunit family. ParC type 1 subfamily. In terms of assembly, heterotetramer composed of ParC and ParE.

Its subcellular location is the cell membrane. It carries out the reaction ATP-dependent breakage, passage and rejoining of double-stranded DNA.. Topoisomerase IV is essential for chromosome segregation. It relaxes supercoiled DNA. Performs the decatenation events required during the replication of a circular DNA molecule. In Haemophilus influenzae (strain ATCC 51907 / DSM 11121 / KW20 / Rd), this protein is DNA topoisomerase 4 subunit A.